The following is a 503-amino-acid chain: Protein FAM124A (503 aa).

Residues 434–470 (LAQSDTVPGRQNHSSDSLHSVSDISSSPCPVFPSTPA) form a disordered region. Residues 436–445 (QSDTVPGRQN) show a composition bias toward polar residues. Residues 447–460 (SSDSLHSVSDISSS) are compositionally biased toward low complexity.

Belongs to the FAM124 family.

The polypeptide is Protein FAM124A (fam124a) (Xenopus tropicalis (Western clawed frog)).